We begin with the raw amino-acid sequence, 421 residues long: Serine hydroxymethyltransferase (421 aa).

(6S)-5,6,7,8-tetrahydrofolate is bound by residues Leu-121 and 125–127 (GHL). The residue at position 229 (Lys-229) is an N6-(pyridoxal phosphate)lysine.

It belongs to the SHMT family. As to quaternary structure, homodimer. Pyridoxal 5'-phosphate serves as cofactor.

It localises to the cytoplasm. It carries out the reaction (6R)-5,10-methylene-5,6,7,8-tetrahydrofolate + glycine + H2O = (6S)-5,6,7,8-tetrahydrofolate + L-serine. It participates in one-carbon metabolism; tetrahydrofolate interconversion. It functions in the pathway amino-acid biosynthesis; glycine biosynthesis; glycine from L-serine: step 1/1. Its function is as follows. Catalyzes the reversible interconversion of serine and glycine with tetrahydrofolate (THF) serving as the one-carbon carrier. This reaction serves as the major source of one-carbon groups required for the biosynthesis of purines, thymidylate, methionine, and other important biomolecules. Also exhibits THF-independent aldolase activity toward beta-hydroxyamino acids, producing glycine and aldehydes, via a retro-aldol mechanism. The polypeptide is Serine hydroxymethyltransferase (Haemophilus influenzae (strain PittEE)).